The following is a 1425-amino-acid chain: Ferlin 1 (1425 aa).

C2 domains are found at residues 1 to 123, 161 to 281, and 506 to 629; these read MAAK…RQWV, VNEG…PRWF, and TKAG…PVWL. Residues 871–952 form a disordered region; sequence RPQASRLSRE…ALAASPEEET (82 aa). 2 stretches are compositionally biased toward basic and acidic residues: residues 877-889 and 912-926; these read LSRE…ERGK and ETEK…KKEG. 2 consecutive C2 domains span residues 1032–1160 and 1192–1319; these read EMDA…EQMV and RADY…QQHY. The chain crosses the membrane as a helical span at residues 1404–1424; that stretch reads TGVWMTVAGIIALVIFVMFLL.

This sequence belongs to the ferlin family.

It is found in the golgi apparatus. The protein resides in the trans-Golgi network membrane. It localises to the endosome membrane. The protein localises to the cytoplasm. Its function is as follows. Plays a role in microneme replenishment, probably at the vesicular trafficking level. Directs microneme organelle traffic differentially based on microneme population. Regulates microneme secretion: facilitates microneme membrane fusion with the plasma membrane. The sequence is that of Ferlin 1 from Toxoplasma gondii.